A 249-amino-acid polypeptide reads, in one-letter code: Small ribosomal subunit protein uS2 (249 aa).

This sequence belongs to the universal ribosomal protein uS2 family.

The protein is Small ribosomal subunit protein uS2 of Bordetella avium (strain 197N).